A 217-amino-acid polypeptide reads, in one-letter code: Phosphatidylinositol phosphate synthase (217 aa).

Transmembrane regions (helical) follow at residues 28–49 (LTPDVVTILGTTASVAGALTLF) and 55–74 (FAGACVVWFFVLFDMLDGAM). Residue 31 to 34 (DVVT) coordinates a CDP-1,2-diacyl-sn-glycerol. Asp-68 and Asp-71 together coordinate Mg(2+). A CDP-1,2-diacyl-sn-glycerol contacts are provided by Gly-72, Arg-76, and Thr-82. Asp-89 and Asp-93 together coordinate Mg(2+). Catalysis depends on Asp-93, which acts as the Proton acceptor. 4 consecutive transmembrane segments (helical) span residues 95–112 (ISDGAVFCGLLWWIAFHM), 118–136 (VIATLICLVTSQVISYIKA), 156–173 (LIIVLTGAGVSDFPFVPW), and 179–200 (VGMWLLAVASVITCVQRLHTVW).

It belongs to the CDP-alcohol phosphatidyltransferase class-I family. In terms of assembly, homodimer. The cofactor is Mg(2+).

The protein localises to the cell membrane. The enzyme catalyses a CDP-1,2-diacyl-sn-glycerol + 1D-myo-inositol 3-phosphate = a 1,2-diacyl-sn-glycero-3-phospho-(1D-myo-inositol-3-phosphate) + CMP + H(+). It carries out the reaction 1,2-di-(9Z-octadecenoyl)-sn-glycero-3-cytidine-5'-diphosphate + 1D-myo-inositol 3-phosphate = 1,2-di-(9Z-octadecenoyl)-sn-glycero-3-phospho-(1D-myo-inositol-3-phosphate) + CMP + H(+). The protein operates within phospholipid metabolism; phosphatidylinositol phosphate biosynthesis. With respect to regulation, competitively inhibited by several inositol 1-phosphate analogs, including the phosphonate analog 1-deoxy-1-phosphonomethyl-myo-inositol (Ino-C-P). Functionally, catalyzes the conjugation of the 1'-hydroxyl group of D-myo-inositol-3-phosphate (also named L-myo-inositol-1-phosphate) with a lipid tail of cytidine diphosphate diacylglycerol (CDP-DAG), forming phosphatidylinositol phosphate (PIP) and CMP. PIP is a precursor of phosphatidylinositol (PI) which is an essential lipid for mycobacteria required for formation of their cell wall. The chain is Phosphatidylinositol phosphate synthase from Mycobacterium bovis (strain BCG / Pasteur 1173P2).